The sequence spans 261 residues: Triosephosphate isomerase (261 aa).

10–12 (NWK) contributes to the substrate binding site. The active-site Electrophile is His-100. Residue Glu-172 is the Proton acceptor of the active site. Substrate-binding positions include Gly-178, Ser-218, and 239 to 240 (GG).

It belongs to the triosephosphate isomerase family. As to quaternary structure, homodimer.

It is found in the cytoplasm. The catalysed reaction is D-glyceraldehyde 3-phosphate = dihydroxyacetone phosphate. It participates in carbohydrate biosynthesis; gluconeogenesis. The protein operates within carbohydrate degradation; glycolysis; D-glyceraldehyde 3-phosphate from glycerone phosphate: step 1/1. In terms of biological role, involved in the gluconeogenesis. Catalyzes stereospecifically the conversion of dihydroxyacetone phosphate (DHAP) to D-glyceraldehyde-3-phosphate (G3P). The chain is Triosephosphate isomerase from Mycobacterium leprae (strain TN).